The sequence spans 116 residues: uncharacterized protein (116 aa).

3 helical membrane passes run 8-28 (FMIY…VSFA), 39-59 (GLLL…NPPF), and 75-95 (FLLI…YLMV).

This sequence to M.jannaschii MJ1580.

Its subcellular location is the cell membrane. This is an uncharacterized protein from Methanothermobacter thermautotrophicus (strain ATCC 29096 / DSM 1053 / JCM 10044 / NBRC 100330 / Delta H) (Methanobacterium thermoautotrophicum).